A 443-amino-acid chain; its full sequence is UDP-N-acetylmuramate--L-alanine ligase (443 aa).

110 to 116 is a binding site for ATP; sequence GAHGKTS.

The protein belongs to the MurCDEF family.

It is found in the cytoplasm. The catalysed reaction is UDP-N-acetyl-alpha-D-muramate + L-alanine + ATP = UDP-N-acetyl-alpha-D-muramoyl-L-alanine + ADP + phosphate + H(+). It participates in cell wall biogenesis; peptidoglycan biosynthesis. Functionally, cell wall formation. This chain is UDP-N-acetylmuramate--L-alanine ligase, found in Lactococcus lactis subsp. cremoris (strain SK11).